The chain runs to 127 residues: Serum amyloid A protein (127 aa).

A signal peptide spans 1 to 18 (MRLCICFVLLAVIVCASA). The segment at 88–127 (QGGVSGRGAEDTRADQEANAWGRNGGDPNRYRPPGLPSKY) is disordered.

The protein belongs to the SAA family. This protein is the precursor of amyloid protein A, which is formed by the removal of approximately 3 residues from the C-terminal end. In terms of tissue distribution, expressed by the liver; secreted in plasma. Also present in the liver and lung irrespective of induction.

It is found in the secreted. Major acute phase reactant. Apolipoprotein of the HDL complex. This Anas platyrhynchos (Mallard) protein is Serum amyloid A protein.